We begin with the raw amino-acid sequence, 318 residues long: tRNA-cytidine(32) 2-sulfurtransferase (318 aa).

Residues 52–57 (SGGKDS) carry the PP-loop motif motif. [4Fe-4S] cluster is bound by residues cysteine 127, cysteine 130, and cysteine 218.

This sequence belongs to the TtcA family. In terms of assembly, homodimer. Mg(2+) is required as a cofactor. [4Fe-4S] cluster serves as cofactor.

The protein resides in the cytoplasm. The enzyme catalyses cytidine(32) in tRNA + S-sulfanyl-L-cysteinyl-[cysteine desulfurase] + AH2 + ATP = 2-thiocytidine(32) in tRNA + L-cysteinyl-[cysteine desulfurase] + A + AMP + diphosphate + H(+). It functions in the pathway tRNA modification. Catalyzes the ATP-dependent 2-thiolation of cytidine in position 32 of tRNA, to form 2-thiocytidine (s(2)C32). The sulfur atoms are provided by the cysteine/cysteine desulfurase (IscS) system. The protein is tRNA-cytidine(32) 2-sulfurtransferase of Actinobacillus pleuropneumoniae serotype 5b (strain L20).